A 235-amino-acid chain; its full sequence is Small ribosomal subunit protein uS3 (235 aa).

One can recognise a KH type-2 domain in the interval 39–107; that stretch reads VRLFLRKELF…PTQINIAEIR (69 aa).

It belongs to the universal ribosomal protein uS3 family. Part of the 30S ribosomal subunit. Forms a tight complex with proteins S10 and S14.

Functionally, binds the lower part of the 30S subunit head. Binds mRNA in the 70S ribosome, positioning it for translation. In Buchnera aphidicola subsp. Baizongia pistaciae (strain Bp), this protein is Small ribosomal subunit protein uS3.